A 699-amino-acid polypeptide reads, in one-letter code: Pollen-specific leucine-rich repeat extensin-like protein 4 (699 aa).

The first 39 residues, 1–39 (MPFYKQPWVFSKVFVLAMAKPPSFGCCFFLLFFSFLSSS), serve as a signal peptide directing secretion. N106 carries an N-linked (GlcNAc...) asparagine glycan. 9 LRR repeats span residues 133 to 157 (VTVVAGVDLNGADIAGHLPAELGLM), 158 to 180 (TDVAMFHLNSNRFCGIIPKSFEK), 182 to 205 (KLMHEFDVSNNRFVGPFPNVVLSW), 206 to 229 (PDVKYFDLRFNDFEGQVPPELFKK), 231 to 251 (LDAIFLNDNRFTSVIPESLGE), 253 to 275 (PASVVTFANNKFTGCIPKSIGNM), 276 to 299 (KNLNEIVFMDNDLGGCFPSEIGKL), 301 to 323 (NVTVFDASKNSFIGRLPTSFVGL), and 324 to 347 (TSVEEIDISGNKLTGLVPHNICQL). Residue N301 is glycosylated (N-linked (GlcNAc...) asparagine). N-linked (GlcNAc...) asparagine glycosylation occurs at N352. A disordered region spans residues 411–699 (KCAGGSSTPS…SPPPPMFAGY (289 aa)). Pro residues-rich tracts occupy residues 421-466 (KPSP…PVPT), 482-504 (KPSPVPSRPVQKPQPPKESPQPD), 518-659 (PPPA…PPAP), and 690-699 (SPPPPMFAGY). Positions 517-699 (SPPPAPVNSP…SPPPPMFAGY (183 aa)) are contains the Ser-Pro(4) repeats.

Hydroxylated on proline residues in the S-P-P-P-P repeat. In terms of processing, O-glycosylated on hydroxyprolines. In terms of tissue distribution, expressed in flowers, stamen, pollen, and pollinated carpels.

Its subcellular location is the secreted. The protein resides in the cell wall. Its function is as follows. Modulates cell morphogenesis by regulating cell wall formation and assembly, and/or growth polarization. This Arabidopsis thaliana (Mouse-ear cress) protein is Pollen-specific leucine-rich repeat extensin-like protein 4 (PEX4).